The primary structure comprises 132 residues: Seminal vesicle protein SVP-2 (132 aa).

Positions 1–14 (HLALLLILENQASG) are cleaved as a signal peptide. The span at 33–81 (HKEEVEESESSRGQDFDKRRFWEKDDPTGEHVSVRHEHLEKSHIRFKED) shows a compositional bias: basic and acidic residues. Disordered regions lie at residues 33–104 (HKEE…LKRH) and 113–132 (VEDQ…MQRV). Positions 104–132 (HDAMEELVSVEDQALANGADPGKSNMQRV) are excised as a propeptide.

This sequence to the SVP-1/-3/-4 precursor, particularly in regions where protein processing must occur.

It localises to the secreted. The protein is Seminal vesicle protein SVP-2 of Cavia porcellus (Guinea pig).